A 123-amino-acid chain; its full sequence is Large ribosomal subunit protein uL14 (123 aa).

This sequence belongs to the universal ribosomal protein uL14 family. As to quaternary structure, part of the 50S ribosomal subunit. Forms a cluster with proteins L3 and L19. In the 70S ribosome, L14 and L19 interact and together make contacts with the 16S rRNA in bridges B5 and B8.

Functionally, binds to 23S rRNA. Forms part of two intersubunit bridges in the 70S ribosome. The protein is Large ribosomal subunit protein uL14 of Koribacter versatilis (strain Ellin345).